A 103-amino-acid polypeptide reads, in one-letter code: Large ribosomal subunit protein bL21 (103 aa).

This sequence belongs to the bacterial ribosomal protein bL21 family. Part of the 50S ribosomal subunit. Contacts protein L20.

Its function is as follows. This protein binds to 23S rRNA in the presence of protein L20. The polypeptide is Large ribosomal subunit protein bL21 (Haemophilus ducreyi (strain 35000HP / ATCC 700724)).